We begin with the raw amino-acid sequence, 728 residues long: 1,4-alpha-glucan branching enzyme GlgB (728 aa).

Asp409 (nucleophile) is an active-site residue. The Proton donor role is filled by Glu462.

It belongs to the glycosyl hydrolase 13 family. GlgB subfamily. As to quaternary structure, monomer.

It carries out the reaction Transfers a segment of a (1-&gt;4)-alpha-D-glucan chain to a primary hydroxy group in a similar glucan chain.. Its pathway is glycan biosynthesis; glycogen biosynthesis. Functionally, catalyzes the formation of the alpha-1,6-glucosidic linkages in glycogen by scission of a 1,4-alpha-linked oligosaccharide from growing alpha-1,4-glucan chains and the subsequent attachment of the oligosaccharide to the alpha-1,6 position. This chain is 1,4-alpha-glucan branching enzyme GlgB, found in Cereibacter sphaeroides (strain ATCC 17023 / DSM 158 / JCM 6121 / CCUG 31486 / LMG 2827 / NBRC 12203 / NCIMB 8253 / ATH 2.4.1.) (Rhodobacter sphaeroides).